The sequence spans 156 residues: Small ribosomal subunit protein uS7 (156 aa).

Belongs to the universal ribosomal protein uS7 family. As to quaternary structure, part of the 30S ribosomal subunit. Contacts proteins S9 and S11.

Its function is as follows. One of the primary rRNA binding proteins, it binds directly to 16S rRNA where it nucleates assembly of the head domain of the 30S subunit. Is located at the subunit interface close to the decoding center, probably blocks exit of the E-site tRNA. The protein is Small ribosomal subunit protein uS7 of Maricaulis maris (strain MCS10) (Caulobacter maris).